The primary structure comprises 629 residues: UvrABC system protein C (629 aa).

One can recognise a GIY-YIG domain in the interval 12–91 (DRPGCYLFKD…IKKHKPKYNI (80 aa)). One can recognise a UVR domain in the interval 200–235 (QEVLERLRARMEQAAERLEFERAAELRDQIRAIEKV).

Belongs to the UvrC family. Interacts with UvrB in an incision complex.

Its subcellular location is the cytoplasm. Its function is as follows. The UvrABC repair system catalyzes the recognition and processing of DNA lesions. UvrC both incises the 5' and 3' sides of the lesion. The N-terminal half is responsible for the 3' incision and the C-terminal half is responsible for the 5' incision. This chain is UvrABC system protein C, found in Symbiobacterium thermophilum (strain DSM 24528 / JCM 14929 / IAM 14863 / T).